The following is a 469-amino-acid chain: Relaxin-3 receptor 1 (469 aa).

Residues 1 to 81 (MQMADAATIA…ESADTEARVR (81 aa)) lie on the Extracellular side of the membrane. Residues Asn36 and Asn40 are each glycosylated (N-linked (GlcNAc...) asparagine). A helical membrane pass occupies residues 82 to 102 (ILISVVYWVVCALGLAGNLLV). At 103-119 (LYLMKSMQGWRKSSINL) the chain is on the cytoplasmic side. The chain crosses the membrane as a helical span at residues 120 to 140 (FVTNLALTDFQFVLTLPFWAV). Residues 141 to 156 (ENALDFKWPFGKAMCK) lie on the Extracellular side of the membrane. A disulfide bond links Cys155 and Cys247. The helical transmembrane segment at 157-177 (IVSMVTSMNMYASVFFLTAMS) threads the bilayer. Residues 178-215 (VTRYHSVASALKSHRTRGHGRGDCCGRSLGDSCCFSAK) lie on the Cytoplasmic side of the membrane. A helical transmembrane segment spans residues 216-236 (ALCVWIWALAALASLPSAIFS). Topologically, residues 237 to 270 (TTVKVMGEELCLVRFPDKLLGRDRQFWLGLYHSQ) are extracellular. Residues 271–291 (KVLLGFVLPLGIIILCYLLLV) form a helical membrane-spanning segment. The Cytoplasmic segment spans residues 292–329 (RFIADRRAAGTKGGAAVAGGRPTGASARRLSKVTKSVT). The chain crosses the membrane as a helical span at residues 330–350 (IVVLSFFLCWLPNQALTTWSI). Over 351–356 (LIKFNA) the chain is Extracellular. The helical transmembrane segment at 357–377 (VPFSQEYFLCQVYAFPVSVCL) threads the bilayer. Residues 378–469 (AHSNSCLNPV…YDLLPSSSAY (92 aa)) are Cytoplasmic-facing.

It belongs to the G-protein coupled receptor 1 family. As to expression, expressed predominantly in brain regions. Highest expression in substantia nigra and pituitary, followed by hippocampus, spinal cord, amygdala, caudate nucleus and corpus callosum, quite low level in cerebellum. In peripheral tissues, relatively high levels in adrenal glands, low levels in pancreas, salivary gland, placenta, mammary gland and testis.

The protein resides in the cell membrane. In terms of biological role, receptor for RNL3/relaxin-3. Binding of the ligand inhibit cAMP accumulation. The polypeptide is Relaxin-3 receptor 1 (RXFP3) (Homo sapiens (Human)).